The chain runs to 593 residues: MRVLFPLLEEEIDVSQESLVSDVCASIGLPLNLVCGGKGRCKKCLVNVKENGEMKEVLACQYSVSDGMEIYASREQAASQILETSSNSDLPFDPIVKCYSLNYTDLVTPMCTYDLDVLRKLIPQTIDTPDYSVLKHFSEVYFLEGYERLHVIVSGNRIIDFIPSNEKEKPIYGIAFDIGTTSVVGYLYDITSGCLLNQHSMLNKQIAFGGDVISRIDYAGEGPESLHKIYEAIMETLAEIITQVCKKASIDTKDIYQTVYCGNSTMAHLFLELNPKHLGLAPFLGFCKDAISLKGMDTPLPINPKGTVTFMPLLGGFVGADTTAVLLGLPRDKKMRLMIDLGTNGEIAVGNCDKYYVASTACGPALEGAGLTMGMRGTTGAIEKVGCENGKITYSVIGKTAPQGFCGSGIVDAIAMLFREGLIAKRGNFIKGDALDAHPMKNRFGVDENNQRYFKIVTAGENPEGKDIIITQKDVRAVQLAKAAIYTGCCLLSENYGIKGSDLEEIVIAGAFGNYIDVHNAQFIGLLPKIEGVPVRSIGNGAGTGAQLYLLSKEEAGICNAIPRITTHIELATDPKFVETYMMNTMFGDNVMI.

In terms of domain architecture, 2Fe-2S ferredoxin-type spans M1–Q76. [2Fe-2S] cluster-binding residues include C35, C41, C44, and C60.

It depends on [2Fe-2S] cluster as a cofactor.

Its function is as follows. Involved in the degradation of the quaternary amines L-proline betaine and L-carnitine. Component of a corrinoid-dependent methyltransferase system that transfers a methyl group from L-proline betaine or L-carnitine to tetrahydrofolate (THF), forming methyl-THF, a key intermediate in the Wood-Ljungdahl acetogenesis pathway. RamQ is not required for the methyl transfer, but it stimulates reduction of reconstituted MtqC from the Co(II) state to the Co(I) state in vitro. It also stimulates the rate of THF methylation. This is Corrinoid activation enzyme RamQ from Eubacterium limosum.